We begin with the raw amino-acid sequence, 485 residues long: Alpha-amylase (485 aa).

An N-terminal signal peptide occupies residues 1 to 18; it reads MQHLSILLVVLGSSIAFA. Glutamine 19 carries the pyrrolidone carboxylic acid modification. Cysteine 46 and cysteine 102 are joined by a disulfide. Residues asparagine 116, arginine 163, and aspartate 172 each coordinate Ca(2+). Cysteine 152 and cysteine 165 are oxidised to a cystine. Residue arginine 200 participates in chloride binding. The Nucleophile role is filled by aspartate 202. Position 206 (histidine 206) interacts with Ca(2+). The Proton donor role is filled by glutamate 238. Asparagine 301 lines the chloride pocket. The cysteines at positions 369 and 375 are disulfide-linked. N-linked (GlcNAc...) asparagine glycans are attached at residues asparagine 423 and asparagine 449. An intrachain disulfide couples cysteine 440 to cysteine 452.

Belongs to the glycosyl hydrolase 13 family. Monomer. Ca(2+) serves as cofactor. Requires chloride as cofactor.

The enzyme catalyses Endohydrolysis of (1-&gt;4)-alpha-D-glucosidic linkages in polysaccharides containing three or more (1-&gt;4)-alpha-linked D-glucose units.. Involved in the digestion of starch. The protein is Alpha-amylase of Hypothenemus hampei (Coffee berry borer).